Consider the following 997-residue polypeptide: Sarcoplasmic/endoplasmic reticulum calcium ATPase 2 (997 aa).

At 1-48 the chain is on the cytoplasmic side; sequence MENAHTKTVEEVLGYFGVNESTGLSLEQVKKLKERWGSNELPAEEGKT. At S38 the chain carries Phosphoserine. The helical transmembrane segment at 49 to 69 threads the bilayer; sequence LLELVIEQFEDLLVRILLLAA. The Lumenal portion of the chain corresponds to 70–89; that stretch reads CISFVLAWFEEGEETITAFV. A helical membrane pass occupies residues 90–110; it reads EPFVILLILVANAIVGVWQER. Topologically, residues 111-253 are cytoplasmic; that stretch reads NAENAIEALK…QERTPLQQKL (143 aa). Residues 254–273 traverse the membrane as a helical segment; sequence DEFGEQLSKVISLICIAVWI. Residues 274-295 lie on the Lumenal side of the membrane; that stretch reads INIGHFNDPVHGGSWIRGAIYY. Y294 and Y295 each carry 3'-nitrotyrosine. The chain crosses the membrane as a helical span at residues 296-313; that stretch reads FKIAVALAVAAIPEGLPA. 4 residues coordinate Ca(2+): V304, A305, I307, and E309. Residues 314–756 are Cytoplasmic-facing; the sequence is VITTCLALGT…EEGRAIYNNM (443 aa). Residue D351 is the 4-aspartylphosphate intermediate of the active site. Mg(2+) is bound by residues D351 and T353. T353 is a binding site for ATP. Residue T441 is modified to Phosphothreonine. ATP is bound by residues E442, R489, and K514. Phosphoserine is present on S531. Residue R559 participates in ATP binding. The interaction with HAX1 stretch occupies residues 575 to 594; sequence MNLEDSANFIKYETNLTFVG. The residue at position 580 (S580) is a Phosphoserine. Residues T624, G625, and D626 each coordinate ATP. A phosphoserine mark is found at S661 and S663. R677 and K683 together coordinate ATP. Mg(2+) is bound at residue D702. N705 contributes to the ATP binding site. Residues 757–776 form a helical membrane-spanning segment; the sequence is KQFIRYLISSNVGEVVCIFL. Positions 767 and 770 each coordinate Ca(2+). Topologically, residues 777-786 are lumenal; it reads TAALGFPEAL. The helical transmembrane segment at 787–807 threads the bilayer; it reads IPVQLLWVNLVTDGLPATALG. Positions 787-807 are interaction with PLN; that stretch reads IPVQLLWVNLVTDGLPATALG. The segment at 788-997 is interaction with TMEM64 and PDIA3; that stretch reads PVQLLWVNLV…RNYLEPAILE (210 aa). N795, T798, and D799 together coordinate Ca(2+). Topologically, residues 808-827 are cytoplasmic; it reads FNPPDLDIMNKPPRNPKEPL. A helical membrane pass occupies residues 828–850; the sequence is ISGWLFFRYLAIGCYVGAATVGA. The Lumenal portion of the chain corresponds to 851-896; that stretch reads AAWWFIAADGGPRVSFYQLSHFLQCKDDNPDFEGVDCAIFESPYPM. An intrachain disulfide couples C875 to C887. A helical membrane pass occupies residues 897-916; that stretch reads TMALSVLVTIEMCNALNSLS. Ca(2+) is bound at residue E907. The Cytoplasmic segment spans residues 917 to 929; it reads ENQSLLRMPPWEN. Residues 930 to 948 traverse the membrane as a helical segment; the sequence is IWLVGSICLSMSLHFLILY. Positions 931–942 are interaction with PLN; the sequence is WLVGSICLSMSL. Residues 949–963 are Lumenal-facing; sequence VEPLPLIFQITPLNL. The helical transmembrane segment at 964-984 threads the bilayer; the sequence is TQWLMVLKISLPVILMDETLK. The Cytoplasmic segment spans residues 985–997; the sequence is FVARNYLEPAILE.

Belongs to the cation transport ATPase (P-type) (TC 3.A.3) family. Type IIA subfamily. In terms of assembly, interacts with sarcolipin (SLN); the interaction inhibits ATP2A2 Ca(2+) affinity. Interacts with phospholamban (PLN); the interaction inhibits ATP2A2 Ca(2+) affinity. Interacts with myoregulin (MRLN). Interacts with ARLN and ERLN; the interactions inhibit ATP2A2 Ca(2+) affinity. Interacts with STRIT1/DWORF; the interaction results in activation of ATP2A2. Interacts with the monomeric forms of SLN, PLN, ARLN, ERLN and STRI1/DWORF. Interacts with HAX1. Interacts with S100A8 and S100A9. Interacts with SLC35G1 and STIM1. Interacts with TMEM203. Interacts with TMEM64 and PDIA3. Interacts with TMX1. Interacts with TMX2. Interacts with VMP1; VMP1 competes with PLN and SLN to prevent them from forming an inhibitory complex with ATP2A2. Interacts with ULK1. Interacts with S100A1 in a Ca(2+)-dependent manner. Interacts with TUNAR. Interacts with FLVCR2; this interaction occurs in the absence of heme and promotes ATP2A2 proteasomal degradation; this complex is dissociated upon heme binding. Interacts with FNIP1. Interacts with TRAM2 (via C-terminus). Requires Mg(2+) as cofactor. Nitrated under oxidative stress. Nitration on the two tyrosine residues inhibits catalytic activity. Post-translationally, serotonylated on Gln residues by TGM2 in response to hypoxia, leading to its inactivation. In terms of tissue distribution, isoform 1 is expressed in the heart.

Its subcellular location is the endoplasmic reticulum membrane. The protein localises to the sarcoplasmic reticulum membrane. The enzyme catalyses Ca(2+)(in) + ATP + H2O = Ca(2+)(out) + ADP + phosphate + H(+). Has different conformational states with differential Ca2+ affinity. The E1 conformational state (active form) shows high Ca(2+) affinity, while the E2 state exhibits low Ca(2+) affinity. Binding of ATP allosterically increases its affinity for subsequent binding of Ca2+. Reversibly inhibited by phospholamban (PLN) at low calcium concentrations. PLN inhibits ATP2A2 Ca(2+) affinity by disrupting its allosteric activation by ATP. Inhibited by sarcolipin (SLN) and myoregulin (MRLN). The inhibition is blocked by VMP1. Enhanced by STRIT1/DWORF; STRIT1 increases activity by displacing sarcolipin (SLN), phospholamban (PLN) and myoregulin (MRLN). Stabilizes SERCA2 in its E2 state. In terms of biological role, this magnesium-dependent enzyme catalyzes the hydrolysis of ATP coupled with the translocation of calcium from the cytosol to the sarcoplasmic reticulum lumen. Involved in autophagy in response to starvation. Upon interaction with VMP1 and activation, controls ER-isolation membrane contacts for autophagosome formation. Also modulates ER contacts with lipid droplets, mitochondria and endosomes. In coordination with FLVCR2 mediates heme-stimulated switching from mitochondrial ATP synthesis to thermogenesis. Its function is as follows. Involved in the regulation of the contraction/relaxation cycle. Acts as a regulator of TNFSF11-mediated Ca(2+) signaling pathways via its interaction with TMEM64 which is critical for the TNFSF11-induced CREB1 activation and mitochondrial ROS generation necessary for proper osteoclast generation. Association between TMEM64 and SERCA2 in the ER leads to cytosolic Ca(2+) spiking for activation of NFATC1 and production of mitochondrial ROS, thereby triggering Ca(2+) signaling cascades that promote osteoclast differentiation and activation. The protein is Sarcoplasmic/endoplasmic reticulum calcium ATPase 2 (ATP2A2) of Felis catus (Cat).